The following is a 921-amino-acid chain: MKMRRGNSSNDHELGILRGANSDTNSDTESIASDRGAFSGPLGRPKRASKKNARFADDLPKRSNSVAGGRGDDDEYVEITLDIRDDSVAVHSVQQAAGGGGHLEDPELALLTKKTLESSLNNTTSLSFFRSTSSRIKNASRELRRVFSRRPSPAVRRFDRTSSAAIHALKGLKFIATKTAAWPAVDQRFDKLSADSNGLLLSAKFWECLGMNKESKDFADQLFRALARRNNVSGDAITKEQLRIFWEQISDESFDAKLQVFFDMVDKDEDGRVTEEEVAEIISLSASANKLSNIQKQAKEYAALIMEELDPDNAGFIMIENLEMLLLQAPNQSVRMGDSRILSQMLSQKLRPAKESNPLVRWSEKIKYFILDNWQRLWIMMLWLGICGGLFTYKFIQYKNKAAYGVMGYCVCVAKGGAETLKFNMALILLPVCRNTITWLRNKTKLGTVVPFDDSLNFHKVIASGIVVGVLLHAGAHLTCDFPRLIAADEDTYEPMEKYFGDQPTSYWWFVKGVEGWTGIVMVVLMAIAFTLATPWFRRNKLNLPNFLKKLTGFNAFWYTHHLFIIVYALLIVHGIKLYLTKIWYQKTTWMYLAVPILLYASERLLRAFRSSIKPVKMIKVAVYPGNVLSLHMTKPQGFKYKSGQFMLVNCRAVSPFEWHPFSITSAPGDDYLSVHIRTLGDWTRKLRTVFSEVCKPPTAGKSGLLRADGGDGNLPFPKVLIDGPYGAPAQDYKKYDVVLLVGLGIGATPMISILKDIINNMKGPDRDSDIENNNSNNNSKGFKTRKAYFYWVTREQGSFEWFKGIMDEISELDEEGIIELHNYCTSVYEEGDARVALIAMLQSLQHAKNGVDVVSGTRVKSHFAKPNWRQVYKKIAVQHPGKRIGVFYCGMPGMIKELKNLALDFSRKTTTKFDFHKENF.

Positions 1–71 (MKMRRGNSSN…RSNSVAGGRG (71 aa)) are disordered. At 1–376 (MKMRRGNSSN…KYFILDNWQR (376 aa)) the chain is on the cytoplasmic side. S8, S9, S26, and S39 each carry phosphoserine. The span at 21–31 (NSDTNSDTESI) shows a compositional bias: polar residues. The span at 44-53 (RPKRASKKNA) shows a compositional bias: basic residues. 2 EF-hand-like regions span residues 193–203 (SADSNGLLLSA) and 230–241 (NNVSGDAITKEQ). EF-hand domains follow at residues 253-288 (SFDAKLQVFFDMVDKDEDGRVTEEEVAEIISLSASA) and 297-332 (QAKEYAALIMEELDPDNAGFIMIENLEMLLLQAPNQ). Ca(2+)-binding residues include D266, D268, D270, R272, and E277. S339, S343, and S347 each carry phosphoserine. A helical transmembrane segment spans residues 377 to 397 (LWIMMLWLGICGGLFTYKFIQ). The Extracellular portion of the chain corresponds to 398-461 (YKNKAAYGVM…FDDSLNFHKV (64 aa)). Residues 415 to 572 (KGGAETLKFN…LFIIVYALLI (158 aa)) form the Ferric oxidoreductase domain. The chain crosses the membrane as a helical span at residues 462–482 (IASGIVVGVLLHAGAHLTCDF). Over 483 to 516 (PRLIAADEDTYEPMEKYFGDQPTSYWWFVKGVEG) the chain is Cytoplasmic. A helical membrane pass occupies residues 517-537 (WTGIVMVVLMAIAFTLATPWF). At 538 to 559 (RRNKLNLPNFLKKLTGFNAFWY) the chain is on the extracellular side. The chain crosses the membrane as a helical span at residues 560-580 (THHLFIIVYALLIVHGIKLYL). Over 581–588 (TKIWYQKT) the chain is Cytoplasmic. Residues 589–606 (TWMYLAVPILLYASERLL) traverse the membrane as a helical segment. Over 607–734 (RAFRSSIKPV…PYGAPAQDYK (128 aa)) the chain is Extracellular. One can recognise an FAD-binding FR-type domain in the interval 611–732 (SSIKPVKMIK…DGPYGAPAQD (122 aa)). A helical transmembrane segment spans residues 735 to 755 (KYDVVLLVGLGIGATPMISIL). At 756 to 921 (KDIINNMKGP…TKFDFHKENF (166 aa)) the chain is on the cytoplasmic side.

It belongs to the RBOH (TC 5.B.1.3) family. Monomer and homodimer. Interacts with BIK1 and FLS2. Interacts with PBL13. Binds to SIK1 upon flagellin perception and becomes activated by phosphorylation. In terms of processing, phosphorylated at Ser-39, Ser-343 and Ser-347 by BIK1 upon flagellin (flg22) treatment. Activated by phosphorylation at Ser-347 mediated by SIK1 and at Ser-8, Ser-9 and Ser-339 upon flagellin (e.g. flg22) perception. As to expression, more abundant in roots than in leaves, stems or inflorescences. Expressed in mesophyll and guard cells.

It localises to the membrane. Inhibited by diphenylene iodinium (DPI). Functionally, calcium-dependent NADPH oxidase that generates superoxide. Involved in the generation of reactive oxygen species (ROS) during incompatible interactions with pathogens, in response to pathogen-associated molecular pattern (PAMP)-triggered immunity (PTI) signaling and in UV-B and abscisic acid ROS-dependent signaling and via SIK1 mediated activation by phosphorylation. Might be required for ROS signal amplification during light stress. The protein is Respiratory burst oxidase homolog protein D of Arabidopsis thaliana (Mouse-ear cress).